The sequence spans 428 residues: Putative zinc metalloprotease SAR1238 (428 aa).

A Zn(2+)-binding site is contributed by histidine 21. The active site involves glutamate 22. Zn(2+) is bound at residue histidine 25. 4 helical membrane-spanning segments follow: residues phenylalanine 172–alanine 194, glycine 309–phenylalanine 331, isoleucine 352–isoleucine 374, and threonine 401–tryptophan 420. The region spanning alanine 186–lysine 269 is the PDZ domain.

The protein belongs to the peptidase M50B family. Requires Zn(2+) as cofactor.

The protein localises to the cell membrane. In Staphylococcus aureus (strain MRSA252), this protein is Putative zinc metalloprotease SAR1238.